Consider the following 429-residue polypeptide: Putative zinc metalloprotease aq_1964 (429 aa).

His-17 provides a ligand contact to Zn(2+). Residue Glu-18 is part of the active site. A Zn(2+)-binding site is contributed by His-21. A helical membrane pass occupies residues 88-110 (ILIALGGPLFNFLFTILVFALVY). In terms of domain architecture, PDZ spans 189-265 (TIKVPNVQKG…AIKLKILRNG (77 aa)). Transmembrane regions (helical) follow at residues 369–391 (IFNL…IEWL) and 406–428 (RVGL…LRLL).

It belongs to the peptidase M50B family. It depends on Zn(2+) as a cofactor.

The protein localises to the cell inner membrane. This chain is Putative zinc metalloprotease aq_1964, found in Aquifex aeolicus (strain VF5).